The chain runs to 323 residues: Prostaglandin-E(2) 9-reductase (323 aa).

NADP(+)-binding positions include 23-24 (TY) and Asp50. Tyr24 serves as a coordination point for substrate. Tyr55 (proton donor) is an active-site residue. His117 lines the substrate pocket. NADP(+) contacts are provided by residues 166 to 167 (SN), Gln190, 216 to 221 (YSALGS), and 270 to 280 (KSFTEKRIKEN).

This sequence belongs to the aldo/keto reductase family.

Its subcellular location is the cytoplasm. The enzyme catalyses prostaglandin F2alpha + NADP(+) = prostaglandin E2 + NADPH + H(+). It carries out the reaction (17R,20S)-17,20-dihydroxypregn-4-en-3-one + NADP(+) = 17alpha-hydroxyprogesterone + NADPH + H(+). It catalyses the reaction (17R,20S)-17,20-dihydroxypregn-4-en-3-one + NAD(+) = 17alpha-hydroxyprogesterone + NADH + H(+). Can convert prostaglandin E2 to prostaglandin F2-alpha. The sequence is that of Prostaglandin-E(2) 9-reductase (AKR1C5) from Oryctolagus cuniculus (Rabbit).